The primary structure comprises 344 residues: Lipase chaperone (344 aa).

The helical transmembrane segment at Val14–Ala34 threads the bilayer. Low complexity predominate over residues Leu45 to Ala57. The segment at Leu45–Ser78 is disordered.

The protein belongs to the lipase chaperone family.

It localises to the cell inner membrane. Functionally, may be involved in the folding of the extracellular lipase during its passage through the periplasm. The polypeptide is Lipase chaperone (Burkholderia ambifaria (strain ATCC BAA-244 / DSM 16087 / CCUG 44356 / LMG 19182 / AMMD) (Burkholderia cepacia (strain AMMD))).